A 139-amino-acid chain; its full sequence is Putative pre-16S rRNA nuclease (139 aa).

Belongs to the YqgF nuclease family.

The protein localises to the cytoplasm. Its function is as follows. Could be a nuclease involved in processing of the 5'-end of pre-16S rRNA. In Streptococcus thermophilus (strain CNRZ 1066), this protein is Putative pre-16S rRNA nuclease.